The sequence spans 145 residues: Cytochrome b (145 aa).

A helical membrane pass occupies residues F38–I58. H42 and H56 together coordinate heme b. H61 is a binding site for a ubiquinone. The helical transmembrane segment at F85–F105 threads the bilayer.

This sequence belongs to the cytochrome b family. In terms of assembly, fungal cytochrome b-c1 complex contains 10 subunits; 3 respiratory subunits, 2 core proteins and 5 low-molecular weight proteins. Cytochrome b-c1 complex is a homodimer. Requires heme b as cofactor.

The protein localises to the mitochondrion inner membrane. Component of the ubiquinol-cytochrome c reductase complex (complex III or cytochrome b-c1 complex) that is part of the mitochondrial respiratory chain. The b-c1 complex mediates electron transfer from ubiquinol to cytochrome c. Contributes to the generation of a proton gradient across the mitochondrial membrane that is then used for ATP synthesis. The polypeptide is Cytochrome b (cob) (Aspergillus flavus).